We begin with the raw amino-acid sequence, 86 residues long: Small ribosomal subunit protein bS18 (86 aa).

The protein belongs to the bacterial ribosomal protein bS18 family. As to quaternary structure, part of the 30S ribosomal subunit. Forms a tight heterodimer with protein bS6.

Functionally, binds as a heterodimer with protein bS6 to the central domain of the 16S rRNA, where it helps stabilize the platform of the 30S subunit. The protein is Small ribosomal subunit protein bS18 of Campylobacter lari (strain RM2100 / D67 / ATCC BAA-1060).